The following is a 218-amino-acid chain: PKHD-type hydroxylase Sala_1910 (218 aa).

The Fe2OG dioxygenase domain maps to 74–172; sequence RIAPPLLTRY…RLVAITFIQS (99 aa). His92, Asp94, and His153 together coordinate Fe cation. Arg163 provides a ligand contact to 2-oxoglutarate.

It depends on Fe(2+) as a cofactor. The cofactor is L-ascorbate.

The chain is PKHD-type hydroxylase Sala_1910 from Sphingopyxis alaskensis (strain DSM 13593 / LMG 18877 / RB2256) (Sphingomonas alaskensis).